The following is a 796-amino-acid chain: ER degradation-enhancing alpha-mannosidase-like protein 1 (796 aa).

An N-terminal signal peptide occupies residues Met1–Cys20. N-linked (GlcNAc...) asparagine glycosylation occurs at Asn86. Glu372 functions as the Proton donor in the catalytic mechanism. Thr495 serves as a coordination point for Ca(2+). 3 N-linked (GlcNAc...) asparagine glycosylation sites follow: Asn517, Asn672, and Asn762.

Belongs to the glycosyl hydrolase 47 family. As to quaternary structure, interacts with PDI1. Requires Ca(2+) as cofactor.

The protein resides in the endoplasmic reticulum lumen. It catalyses the reaction Hydrolysis of terminal, non-reducing alpha-D-mannose residues in alpha-D-mannosides.. It participates in protein modification; protein glycosylation. Alpha-1,2-specific exomannosidase involved in endoplasmic reticulum-associated degradation (ERAD). Delivers misfolded glycoproteins to proteasomes. Forms a complex with PDI1 to process unfolded protein-bound Man8GlcNAc2 oligosaccharides to Man7GlcNAc2, promoting degradation in unfolded protein response. In Saccharomyces cerevisiae (strain ATCC 204508 / S288c) (Baker's yeast), this protein is ER degradation-enhancing alpha-mannosidase-like protein 1 (MNL1).